Reading from the N-terminus, the 404-residue chain is Nicotinate phosphoribosyltransferase (404 aa).

A Phosphohistidine; by autocatalysis modification is found at His224.

It belongs to the NAPRTase family. Transiently phosphorylated on a His residue during the reaction cycle. Phosphorylation strongly increases the affinity for substrates and increases the rate of nicotinate D-ribonucleotide production. Dephosphorylation regenerates the low-affinity form of the enzyme, leading to product release.

It catalyses the reaction nicotinate + 5-phospho-alpha-D-ribose 1-diphosphate + ATP + H2O = nicotinate beta-D-ribonucleotide + ADP + phosphate + diphosphate. It functions in the pathway cofactor biosynthesis; NAD(+) biosynthesis; nicotinate D-ribonucleotide from nicotinate: step 1/1. Functionally, catalyzes the synthesis of beta-nicotinate D-ribonucleotide from nicotinate and 5-phospho-D-ribose 1-phosphate at the expense of ATP. This is Nicotinate phosphoribosyltransferase from Proteus mirabilis (strain HI4320).